The following is a 289-amino-acid chain: WUSCHEL-related homeobox 1 (289 aa).

A compositionally biased stretch (low complexity) spans 1–11 (MDHMQQQQRQQ). Residues 1–34 (MDHMQQQQRQQVGGGGGEEVAGRGGVPVCRPSGT) form a disordered region. Over residues 12–25 (VGGGGGEEVAGRGG) the composition is skewed to gly residues. A DNA-binding region (homeobox; WUS-type) is located at residues 31-96 (PSGTRWTPTT…NHKARERQKK (66 aa)).

It belongs to the WUS homeobox family. As to quaternary structure, interacts with TPR1, TPR2 and TPR3. As to expression, expressed in young leaf primordia. Expressed in branch an floral meristems. Transiently expressed in the shoot apex.

It localises to the nucleus. Transcription repressor required for the formation and development of tiller buds and panicles. Required for tiller formation and female sterility. Required for the early developmental stages of axillary meristem formation. Plays a role in maintaining the axillary premeristem zone and in promoting the formation of the axillary meristem by promoting OSH1 expression. Does not seem to be involved in maintenance of the shoot apical meristem (SAM). In Oryza sativa subsp. japonica (Rice), this protein is WUSCHEL-related homeobox 1.